Here is a 60-residue protein sequence, read N- to C-terminus: Cytotoxin 2 (60 aa).

Disulfide bonds link Cys3–Cys21, Cys14–Cys38, Cys42–Cys53, and Cys54–Cys59.

Belongs to the three-finger toxin family. Short-chain subfamily. Type IA cytotoxin sub-subfamily. In terms of assembly, monomer, or heterodimer with alpha-cobratoxin (AC P01391); disulfide-linked. In terms of tissue distribution, expressed by the venom gland.

The protein resides in the secreted. It localises to the target cell membrane. Its function is as follows. Monomer: shows cytolytic activity. In terms of biological role, heterodimer: has no cytolytic activity, but retains most of the alpha-cobratoxin capacity to compete with alpha-bungarotoxin for binding to Torpedo and alpha-7/CHRNA7 nicotinic acetylcholine receptors (nAChRs) as well as to Lymnea stagnalis acetylcholine-binding protein. This Naja kaouthia (Monocled cobra) protein is Cytotoxin 2.